The primary structure comprises 148 residues: D-aminoacyl-tRNA deacylase (148 aa).

The Gly-cisPro motif, important for rejection of L-amino acids motif lies at 137–138 (GP).

It belongs to the DTD family. In terms of assembly, homodimer.

The protein localises to the cytoplasm. The enzyme catalyses glycyl-tRNA(Ala) + H2O = tRNA(Ala) + glycine + H(+). It catalyses the reaction a D-aminoacyl-tRNA + H2O = a tRNA + a D-alpha-amino acid + H(+). An aminoacyl-tRNA editing enzyme that deacylates mischarged D-aminoacyl-tRNAs. Also deacylates mischarged glycyl-tRNA(Ala), protecting cells against glycine mischarging by AlaRS. Acts via tRNA-based rather than protein-based catalysis; rejects L-amino acids rather than detecting D-amino acids in the active site. By recycling D-aminoacyl-tRNA to D-amino acids and free tRNA molecules, this enzyme counteracts the toxicity associated with the formation of D-aminoacyl-tRNA entities in vivo and helps enforce protein L-homochirality. This is D-aminoacyl-tRNA deacylase from Latilactobacillus sakei subsp. sakei (strain 23K) (Lactobacillus sakei subsp. sakei).